We begin with the raw amino-acid sequence, 233 residues long: UPF0128 protein MJ1463 (233 aa).

The protein belongs to the UPF0128 family.

The polypeptide is UPF0128 protein MJ1463 (Methanocaldococcus jannaschii (strain ATCC 43067 / DSM 2661 / JAL-1 / JCM 10045 / NBRC 100440) (Methanococcus jannaschii)).